The sequence spans 186 residues: Intraflagellar transport protein 27 homolog (186 aa).

GTP-binding positions include 12 to 19, 64 to 68, and 123 to 126; these read GDPTVGKT, DSAGK, and NKTD.

Belongs to the small GTPase superfamily. Rab family. In terms of assembly, component of the IFT complex B, at least composed of IFT20, IFT22, IFT25, IFT27, IFT46, IFT52, TRAF3IP1/IFT54, IFT57, IFT74, IFT80, IFT81, and IFT88. Interacts with IFT25. Interacts with IFT70B. Interacts with RABL2/RABL2A; binding is equal in the presence of GTP or GDP. Interacts with IFT88. Interacts with ARL6; recognizes and binds with the GTP-free form of ARL6.

It localises to the cell projection. It is found in the cilium. The protein resides in the cytoplasm. The protein localises to the flagellum. Its function is as follows. Small GTPase-like component of the intraflagellar transport (IFT) complex B that promotes the exit of the BBSome complex from cilia via its interaction with ARL6. Not involved in entry of the BBSome complex into cilium. Prevents aggregation of GTP-free ARL6. Required for hedgehog signaling. Forms a subcomplex within the IFT complex B with IFT25. Its role in intraflagellar transport is mainly seen in tissues rich in ciliated cells such as kidney and testis. Essential for male fertility, spermiogenesis and sperm flagella formation. Plays a role in the early development of the kidney. May be involved in the regulation of ureteric bud initiation. This chain is Intraflagellar transport protein 27 homolog (IFT27), found in Bos taurus (Bovine).